Consider the following 286-residue polypeptide: MENSCADAEFMVATPDTTADVLTIAGRSFRSRLMTGTGKYRSFEQMRASIAASGCEIVTVAVRRVQTNAPGHEGLAEALDWQKIWMLPNTAGCATAEEAIRVARLGREMAKLLGQEDNNFVKLEVIPDSRYLLPDPIGTLQAAEQLVKEGFAVLPYINADPLLAKRLEEVGCATVMPLGSPIGSGQGIRNEANIRIIVENAKVPVVVDAGIGTASEAAQAMELGADALLINTAIAQAEDPARMAQAMAMATIAGRLAFQAGRIPTRSAAIASSPQTGLVGQSPATV.

Residue K122 is the Schiff-base intermediate with DXP of the active site. 1-deoxy-D-xylulose 5-phosphate-binding positions include G183, 209 to 210 (AG), and 231 to 232 (NT).

It belongs to the ThiG family. Homotetramer. Forms heterodimers with either ThiH or ThiS.

It localises to the cytoplasm. It catalyses the reaction [ThiS sulfur-carrier protein]-C-terminal-Gly-aminoethanethioate + 2-iminoacetate + 1-deoxy-D-xylulose 5-phosphate = [ThiS sulfur-carrier protein]-C-terminal Gly-Gly + 2-[(2R,5Z)-2-carboxy-4-methylthiazol-5(2H)-ylidene]ethyl phosphate + 2 H2O + H(+). Its pathway is cofactor biosynthesis; thiamine diphosphate biosynthesis. In terms of biological role, catalyzes the rearrangement of 1-deoxy-D-xylulose 5-phosphate (DXP) to produce the thiazole phosphate moiety of thiamine. Sulfur is provided by the thiocarboxylate moiety of the carrier protein ThiS. In vitro, sulfur can be provided by H(2)S. The polypeptide is Thiazole synthase (Synechococcus elongatus (strain ATCC 33912 / PCC 7942 / FACHB-805) (Anacystis nidulans R2)).